The primary structure comprises 144 residues: MSFKNKLKDYFMGDEYEYEYVDEDNQSEEPTQKEAKVNPKNVVNLSSVQQSNSRVVLIEPRNYNEAQEIADNIVNRRAVIINLQRVDHQQAKRIVDFLSGTVYAVKGDIQKLGAETFLCTPDNVEVSGTITEMLYEQEEYDKGW.

This sequence belongs to the SepF family. In terms of assembly, homodimer. Interacts with FtsZ.

It is found in the cytoplasm. Its function is as follows. Cell division protein that is part of the divisome complex and is recruited early to the Z-ring. Probably stimulates Z-ring formation, perhaps through the cross-linking of FtsZ protofilaments. Its function overlaps with FtsA. The sequence is that of Cell division protein SepF from Oceanobacillus iheyensis (strain DSM 14371 / CIP 107618 / JCM 11309 / KCTC 3954 / HTE831).